The chain runs to 2531 residues: Neurogenic locus notch homolog protein 1 (2531 aa).

The first 18 residues, 1–18 (MPRLLAPLLCLTLLPALA), serve as a signal peptide directing secretion. The Extracellular segment spans residues 19-1725 (ARGLRCSQPS…VEPPLPSQLH (1707 aa)). 4 consecutive EGF-like domains span residues 20-58 (RGLRCSQPSGTCLNGGRCEVANGTEACVCSGAFVGQRCQ), 59-99 (DPSP…PLCL), 102-139 (LANACLANPCRNGGTCDLLTLTEYKCRCPPGWSGKSCQ), and 140-176 (QADPCASNPCANGGQCLPFESSYICGCPPGFHGPTCR). 33 disulfide bridges follow: C24-C37, C31-C46, C48-C57, C63-C74, C68-C87, C89-C98, C106-C117, C111-C127, C129-C138, C144-C155, C149-C164, C166-C175, C182-C195, C189-C204, C206-C215, C222-C233, C227-C243, C245-C254, C261-C272, C266-C281, C283-C292, C299-C312, C306-C321, C323-C332, C339-C350, C344-C359, C361-C370, C376-C387, C381-C398, C400-C409, C416-C429, C423-C438, and C440-C449. A glycan (N-linked (GlcNAc...) asparagine) is linked at N41. O-linked (Glc...) serine glycosylation occurs at S65. T73 carries O-linked (Fuc...) threonine glycosylation. O-linked (Fuc...) threonine glycosylation is present at T116. The O-linked (Glc...) serine glycan is linked to S146. The 39-residue stretch at 178–216 (DVNECSQNPGLCRHGGTCHNEIGSYRCACRATHTGPHCE) folds into the EGF-like 5; calcium-binding domain. Residue T194 is glycosylated (O-linked (Fuc...) threonine). Residues 218–255 (PYVPCSPSPCQNGGTCRPTGDTTHECACLPGFAGQNCE) form the EGF-like 6 domain. An O-linked (Fuc...) threonine; alternate glycan is attached at T232. T232 is a glycosylation site (O-linked (GalNAc...) threonine; alternate). One can recognise an EGF-like 7; calcium-binding domain in the interval 257–293 (NVDDCPGNNCKNGGACVDGVNTYNCRCPPEWTGQYCT). Residues 295–333 (DVDECQLMPNACQNGGTCHNSHGGYNCVCVNGWTGEDCS) enclose the EGF-like 8; calcium-binding domain. The O-linked (Fuc...) threonine glycan is linked to T311. One can recognise an EGF-like 9; calcium-binding domain in the interval 335–371 (NIDDCASAACFQGATCHDRVASFYCECPHGRTGLLCH). S341 carries an O-linked (Glc...) serine glycan. O-linked (Fuc...) threonine glycosylation is present at T349. One can recognise an EGF-like 10 domain in the interval 372–410 (LNDACISNPCNEGSNCDTNPVNGKAICTCPSGYTGPACS). S378 carries an O-linked (Glc...) serine glycan. One can recognise an EGF-like 11; calcium-binding domain in the interval 412 to 450 (DVDECALGANPCEHAGKCLNTLGSFECQCLQGYTGPRCE). An interaction with DLL4 region spans residues 420-421 (AN). T432 and S435 together coordinate Ca(2+). Residue S435 is glycosylated (O-linked (Glc...) serine). Positions 448–452 (RCEID) are interaction with DLL4. Residues D452, V453, and E455 each coordinate Ca(2+). In terms of domain architecture, EGF-like 12; calcium-binding spans 452-488 (DVNECISNPCQNDATCLDQIGEFQCICMPGYEGVYCE). 3 disulfide bridges follow: C456/C467, C461/C476, and C478/C487. S458 is a glycosylation site (O-linked (Glc...) serine). T466 carries O-linked (Fuc...) threonine glycosylation. Ca(2+) is bound by residues D469 and Q470. Positions 490, 491, and 493 each coordinate Ca(2+). Residues 490–526 (NTDECASSPCLHNGRCVDKINEFLCQCPKGFSGHLCQ) enclose the EGF-like 13; calcium-binding domain. Disulfide bonds link C494–C505, C499–C514, C516–C525, C532–C543, C537–C552, C554–C563, C570–C580, C575–C589, C591–C600, C607–C618, C612–C627, C629–C638, C645–C655, C650–C664, C666–C675, C682–C693, C687–C702, C704–C713, C720–C730, C725–C739, C741–C750, C757–C768, C762–C777, C779–C788, C795–C806, C800–C815, C817–C826, C833–C844, C838–C855, C857–C866, C873–C884, C878–C893, C895–C904, C911–C922, C916–C931, C933–C942, C949–C960, C954–C969, C971–C980, C987–C998, C992–C1007, C1009–C1018, C1025–C1036, C1030–C1045, C1047–C1056, C1063–C1074, C1068–C1083, C1085–C1094, C1101–C1122, C1116–C1131, C1133–C1142, C1149–C1160, C1154–C1169, C1171–C1180, C1187–C1198, C1192–C1207, C1209–C1218, C1225–C1244, C1238–C1253, C1255–C1264, C1271–C1284, C1276–C1293, C1295–C1304, C1311–C1322, C1316–C1334, C1336–C1345, C1352–C1363, C1357–C1372, C1374–C1383, C1391–C1403, C1397–C1414, C1416–C1425, C1449–C1472, C1454–C1467, and C1463–C1479. A glycan (O-linked (Glc...) serine) is linked at S496. D507 and K508 together coordinate Ca(2+). The region spanning 528–564 (DVDECASTPCKNGAKCLDGPNTYTCVCTEGYTGTHCE) is the EGF-like 14; calcium-binding domain. O-linked (Glc...) serine glycosylation occurs at S534. The region spanning 566–601 (DIDECDPDPCHYGLCKDGVATFTCLCQPGYTGHHCE) is the EGF-like 15; calcium-binding domain. An EGF-like 16; calcium-binding domain is found at 603 to 639 (NINECHSQPCRHGGTCQDRDNYYLCLCLKGTTGPNCE). Residue S609 is glycosylated (O-linked (Glc...) serine). Residue T617 is glycosylated (O-linked (Fuc...) threonine). The region spanning 641 to 676 (NLDDCASNPCDSGTCLDKIDGYECACEPGYTGSMCN) is the EGF-like 17; calcium-binding domain. S647 carries an O-linked (Glc...) serine glycan. The EGF-like 18; calcium-binding domain occupies 678 to 714 (NIDECAGSPCHNGGTCEDGIAGFTCRCPEGYHDPTCL). The O-linked (Fuc...) threonine glycan is linked to T692. Positions 716 to 751 (EVNECNSNPCIHGACRDGLNGYKCDCAPGWSGTNCD) constitute an EGF-like 19; calcium-binding domain. The O-linked (Glc...) serine glycan is linked to S722. One can recognise an EGF-like 20; calcium-binding domain in the interval 753–789 (NNNECESNPCVNGGTCKDMTSGYVCTCREGFSGPNCQ). A glycan (O-linked (Glc...) serine) is linked at S759. T767 carries O-linked (Fuc...) threonine glycosylation. A glycan (O-linked (GlcNAc) serine) is linked at S784. In terms of domain architecture, EGF-like 21; calcium-binding spans 791 to 827 (NINECASNPCLNQGTCIDDVAGYKCNCPLPYTGATCE). O-linked (Glc...) serine glycosylation is present at S797. O-linked (Fuc...) threonine glycosylation is present at T805. One can recognise an EGF-like 22 domain in the interval 829-867 (VLAPCATSPCKNSGVCKESEDYESFSCVCPTGWQGQTCE). One can recognise an EGF-like 23; calcium-binding domain in the interval 869–905 (DINECVKSPCRHGASCQNTNGSYRCLCQAGYTGRNCE). N-linked (GlcNAc...) asparagine glycosylation occurs at N888. An O-linked (GlcNAc) threonine glycan is attached at T900. Residues 907-943 (DIDDCRPNPCHNGGSCTDGVNAAFCDCLPGFQGAFCE) form the EGF-like 24 domain. An O-linked (Fuc) serine glycan is attached at S921. Positions 945–981 (DINECASNPCQNGANCTDCVDSYTCTCPTGFNGIHCE) constitute an EGF-like 25; calcium-binding domain. O-linked (Glc...) serine glycosylation is present at S951. Residue N959 is glycosylated (N-linked (GlcNAc...) asparagine). The 37-residue stretch at 983–1019 (NTPDCTESSCFNGGTCVDGINSFTCLCPPGFTGSYCQ) folds into the EGF-like 26 domain. The O-linked (Fuc...) threonine glycan is linked to T997. The EGF-like 27; calcium-binding domain maps to 1021 to 1057 (DVNECDSRPCLHGGTCQDSYGTYKCTCPQGYTGLNCQ). O-linked (Glc...) serine glycosylation is present at S1027. The O-linked (Fuc...) threonine glycan is linked to T1035. EGF-like domains follow at residues 1059–1095 (LVRWCDSAPCKNGGKCWQTNTQYHCECRSGWTGFNCD) and 1097–1143 (LSVS…SYCE). O-linked (Glc...) serine glycosylation is present at S1065. An EGF-like 30; calcium-binding domain is found at 1145–1181 (EVDECSPNPCQNGATCTDYLGGFSCKCVAGYHGSNCS). O-linked (Fuc...) threonine glycosylation is present at T1159. N1179 carries N-linked (GlcNAc...) asparagine glycosylation. Residues 1183–1219 (EINECLSQPCQNGGTCIDLTNTYKCSCPRGTQGVHCE) enclose the EGF-like 31; calcium-binding domain. Residue S1189 is glycosylated (O-linked (Glc...) serine). Residue T1197 is glycosylated (O-linked (Fuc...) threonine). The 45-residue stretch at 1221-1265 (NVDDCHPPLDPASRSPKCFNNGTCVDQVGGYTCTCPPGFVGERCE) folds into the EGF-like 32; calcium-binding domain. N1241 is a glycosylation site (N-linked (GlcNAc...) asparagine). EGF-like domains are found at residues 1267–1305 (DVNECLSNPCDPRGTQNCVQRVNDFHCECRAGHTGRRCE), 1307–1346 (VINGCRGKPCRNGGVCAVASNTARGFICRCPAGFEGATCE), 1348–1384 (DARTCGSLRCLNGGTCISGPRSPTCLCLGSFTGPECQ), and 1387–1426 (ASSPCVGSNPCYNQGTCEPTSESPFYRCLCPAKFNGLLCH). Residue S1273 is glycosylated (O-linked (Glc...) serine). O-linked (Fuc...) threonine glycosylation occurs at T1362. An O-linked (GlcNAc...) threonine glycan is attached at T1379. T1402 carries O-linked (Fuc...) threonine; alternate glycosylation. The O-linked (GalNAc...) threonine; alternate glycan is linked to T1402. LNR repeat units follow at residues 1449–1489 (CELP…PWKN), 1490–1531 (CTQS…CNPL), and 1532–1571 (YDQYCKDHFSDGHCDQGCNSAECEWDGLDCAEHVPERLAA). Positions 1457, 1460, 1475, and 1478 each coordinate Ca(2+). N-linked (GlcNAc...) asparagine glycosylation occurs at N1489. 5 disulfides stabilise this stretch: C1490/C1514, C1496/C1509, C1505/C1521, C1536/C1549, and C1545/C1561. An N-linked (GlcNAc...) asparagine glycan is attached at N1587. A glycan (O-linked (GalNAc...) threonine) is linked at T1715. The interval 1718–1750 (PPLPSQLHLMYVAAAAFVLLFFVGCGVLLSRKR) is interaction with PSEN1. The helical transmembrane segment at 1726 to 1746 (LMYVAAAAFVLLFFVGCGVLL) threads the bilayer. The Cytoplasmic segment spans residues 1747 to 2531 (SRKRRRQHGQ…QITHIPEAFK (785 aa)). K1749 is covalently cross-linked (Glycyl lysine isopeptide (Lys-Gly) (interchain with G-Cter in ubiquitin)). The disordered stretch occupies residues 1770 to 1798 (KKKRREPLGEDSVGLKPLKNASDGALMDD). T1851 bears the Phosphothreonine mark. ANK repeat units follow at residues 1917 to 1946 (TGETALHLAARYSRSDAAKRLLEASADANI), 1950 to 1980 (MGRTPLHAAVSADAQGVFQILLRNRATDLDA), 1984 to 2013 (DGTTPLILAARLAVEGMLEDLINSHADVNA), 2017 to 2046 (LGKSALHWAAAVNNVDAAVVLLKNGANKDM), and 2050 to 2079 (KEETPLFLAAREGSYETAKVLLDHFANRDI). Positions 1937–1945 (LLEASADAN) are HIF1AN-binding. N1945 bears the (3S)-3-hydroxyasparagine; by HIF1AN mark. The HIF1AN-binding stretch occupies residues 2004–2012 (LINSHADVN). Position 2012 is a (3S)-3-hydroxyasparagine; by HIF1AN (N2012). Disordered stretches follow at residues 2141–2185 (SATQ…DSSS), 2382–2428 (QPQN…SLPV), and 2440–2531 (PTSL…EAFK). The segment covering 2382 to 2395 (QPQNLQPPSQPHLS) has biased composition (low complexity). Polar residues predominate over residues 2440–2478 (PTSLPSSMVPPMTTTQFLTPPSQHSYSSSPVDNTPSHQL). The span at 2488–2503 (PSPESPDQWSSSSPHS) shows a compositional bias: low complexity. The span at 2504–2524 (NISDWSEGISSPPTSMPSQIT) shows a compositional bias: polar residues.

It belongs to the NOTCH family. As to quaternary structure, heterodimer of a C-terminal fragment N(TM) and an N-terminal fragment N(EC) which are probably linked by disulfide bonds. Interacts with DNER, DTX1, DTX2 and RBPJ/RBPSUH. Also interacts with MAML1, MAML2 and MAML3 which act as transcriptional coactivators for NOTCH1. Notch 1 intracellular domain interacts with SNW1; the interaction involves multimerized NOTCH1 NICD and is implicated in a formation of an intermediate preactivation complex which associates with DNA-bound CBF-1/RBPJ. The activated membrane-bound form interacts with AAK1 which promotes NOTCH1 stabilization. Forms a trimeric complex with FBXW7 and SGK1. Interacts with HIF1AN. HIF1AN negatively regulates the function of notch intracellular domain (NICD), accelerating myogenic differentiation. Interacts (via NICD) with SNAI1 (via zinc fingers); the interaction induces SNAI1 degradation via MDM2-mediated ubiquitination and inhibits SNAI1-induced cell invasion. Interacts (via NICD) with MDM2A. Interacts (via NICD) with BCL6; the interaction decreases MAML1 recruitment by NOTCH1 NICD on target genes DNA and inhibits NOTCH1 transactivation activity. Interacts with THBS4. Interacts (via the EGF-like repeat region) with CCN3 (via CTCK domain). Interacts (via EGF-like domains) with DLL4 (via N-terminal DSL and MNNL domains). Interacts with ZMIZ1. Interacts (via NICD domain) with MEGF10 (via the cytoplasmic domain). Interacts with DLL1 and JAG1. Interacts (via NICD domain) with PRAG1. Forms a complex with PRAG1, N1ICD and MAML1, in a MAML1-dependent manner. Interacts (via transmembrane region) with PSEN1; the interaction is direct. Interacts with ZFP64. Post-translationally, synthesized in the endoplasmic reticulum as an inactive form which is proteolytically cleaved by a furin-like convertase in the trans-Golgi network before it reaches the plasma membrane to yield an active, ligand-accessible form. Cleavage results in a C-terminal fragment N(TM) and a N-terminal fragment N(EC). Following ligand binding, it is cleaved by ADAM17 to yield a membrane-associated intermediate fragment called notch extracellular truncation (NEXT). Following endocytosis, this fragment is then cleaved by one of the catalytic subunits of gamma-secretase (PSEN1 or PSEN2) to release a Notch-derived peptide containing the intracellular domain (NICD) from the membrane. Phosphorylated. In terms of processing, O-glycosylated on the EGF-like domains. O-glucosylated at Ser-435 by KDELC1 and KDELC2. Contains both O-linked fucose and O-linked glucose in the EGF-like domains 11, 12 and 13, which are interacting with the residues on DLL4. O-linked glycosylation by GALNT11 is involved in determination of left/right symmetry: glycosylation promotes activation of NOTCH1, possibly by promoting cleavage by ADAM17, modulating the balance between motile and immotile (sensory) cilia at the left-right organiser (LRO). MFNG-, RFNG- and LFNG-mediated modification of O-fucose residues at specific EGF-like domains results in inhibition of its activation by JAG1 and enhancement of its activation by DLL1 via an increased binding to DLL1. Post-translationally, ubiquitinated. Undergoes 'Lys-29'-linked polyubiquitination by ITCH; promotes the lysosomal degradation of non-activated internalized NOTCH1. Deubiquitination by USP12 is required for transport of internalized non-activated receptor from late endosomes to lysosomes for degradation. Monoubiquitination at Lys-1749 is required for activation by gamma-secretase cleavage, it promotes interaction with AAK1, which stabilizes it. Deubiquitination by EIF3F is necessary for nuclear import of activated Notch. Hydroxylated at Asn-1945 and Asn-2012 by HIF1AN. Hydroxylation reduces affinity for HI1AN and may thus indirectly modulate negative regulation of NICD. Expressed in the brain, kidney and spleen. Expressed in postnatal central nervous system (CNS) germinal zones and, in early postnatal life, within numerous cells throughout the CNS. Found in both subventricular and ventricular germinal zones.

It is found in the cell membrane. Its subcellular location is the late endosome membrane. It localises to the nucleus. In terms of biological role, functions as a receptor for membrane-bound ligands Jagged-1 (JAG1), Jagged-2 (JAG2) and Delta-1 (DLL1) to regulate cell-fate determination. Upon ligand activation through the released notch intracellular domain (NICD) it forms a transcriptional activator complex with RBPJ/RBPSUH and activates genes of the enhancer of split locus. Affects the implementation of differentiation, proliferation and apoptotic programs. Involved in angiogenesis; negatively regulates endothelial cell proliferation and migration and angiogenic sprouting. Involved in the maturation of both CD4(+) and CD8(+) cells in the thymus. Important for follicular differentiation and possibly cell fate selection within the follicle. During cerebellar development, functions as a receptor for neuronal DNER and is involved in the differentiation of Bergmann glia. Represses neuronal and myogenic differentiation. May play an essential role in postimplantation development, probably in some aspect of cell specification and/or differentiation. May be involved in mesoderm development, somite formation and neurogenesis. May enhance HIF1A function by sequestering HIF1AN away from HIF1A. Required for the THBS4 function in regulating protective astrogenesis from the subventricular zone (SVZ) niche after injury. Involved in determination of left/right symmetry by modulating the balance between motile and immotile (sensory) cilia at the left-right organiser (LRO). This Rattus norvegicus (Rat) protein is Neurogenic locus notch homolog protein 1 (Notch1).